Reading from the N-terminus, the 203-residue chain is ATP-dependent Clp protease proteolytic subunit 2 (203 aa).

Residue Ser-98 is the Nucleophile of the active site. His-123 is a catalytic residue.

This sequence belongs to the peptidase S14 family. In terms of assembly, fourteen ClpP subunits assemble into 2 heptameric rings which stack back to back to give a disk-like structure with a central cavity, resembling the structure of eukaryotic proteasomes.

It is found in the cytoplasm. It carries out the reaction Hydrolysis of proteins to small peptides in the presence of ATP and magnesium. alpha-casein is the usual test substrate. In the absence of ATP, only oligopeptides shorter than five residues are hydrolyzed (such as succinyl-Leu-Tyr-|-NHMec, and Leu-Tyr-Leu-|-Tyr-Trp, in which cleavage of the -Tyr-|-Leu- and -Tyr-|-Trp bonds also occurs).. In terms of biological role, cleaves peptides in various proteins in a process that requires ATP hydrolysis. Has a chymotrypsin-like activity. Plays a major role in the degradation of misfolded proteins. This chain is ATP-dependent Clp protease proteolytic subunit 2, found in Chlamydia muridarum (strain MoPn / Nigg).